A 158-amino-acid chain; its full sequence is Endoribonuclease YbeY (158 aa).

Zn(2+)-binding residues include histidine 119, histidine 123, and histidine 129.

The protein belongs to the endoribonuclease YbeY family. Requires Zn(2+) as cofactor.

The protein localises to the cytoplasm. Single strand-specific metallo-endoribonuclease involved in late-stage 70S ribosome quality control and in maturation of the 3' terminus of the 16S rRNA. This Acinetobacter baumannii (strain AB307-0294) protein is Endoribonuclease YbeY.